The chain runs to 435 residues: Protein CHLOROPLAST IMPORT APPARATUS 2 (435 aa).

Residues methionine 1–arginine 59 constitute a chloroplast transit peptide. Disordered regions lie at residues lysine 21–asparagine 66 and alanine 412–arginine 435. The segment covering serine 29–serine 49 has biased composition (low complexity). Residues arginine 56–proline 65 are compositionally biased toward basic residues. In terms of domain architecture, CCT spans arginine 383 to arginine 425.

As to expression, expressed in leaves and young flower buds.

The protein localises to the plastid. It is found in the chloroplast. The protein resides in the nucleus. Its function is as follows. Responsible for specific up-regulation of the translocon genes TOC33 and TOC75 in leaves. Involved in the general chloroplast protein import pathway regulation, including protein import and protein translation efficiencies. The protein is Protein CHLOROPLAST IMPORT APPARATUS 2 (CIA2) of Arabidopsis thaliana (Mouse-ear cress).